The sequence spans 428 residues: Adenylosuccinate synthetase (428 aa).

Residues 12-18 (GDEGKGK) and 40-42 (GHT) contribute to the GTP site. The active-site Proton acceptor is the aspartate 13. Mg(2+)-binding residues include aspartate 13 and glycine 40. IMP is bound by residues 13-16 (DEGK), 38-41 (NAGH), threonine 130, arginine 144, glutamine 225, threonine 240, and arginine 304. Catalysis depends on histidine 41, which acts as the Proton donor. Residue 300 to 306 (TTTGRPR) coordinates substrate. GTP contacts are provided by residues arginine 306, 332 to 334 (KLD), and 414 to 416 (SVG).

This sequence belongs to the adenylosuccinate synthetase family. As to quaternary structure, homodimer. Mg(2+) is required as a cofactor.

The protein resides in the cytoplasm. It catalyses the reaction IMP + L-aspartate + GTP = N(6)-(1,2-dicarboxyethyl)-AMP + GDP + phosphate + 2 H(+). It participates in purine metabolism; AMP biosynthesis via de novo pathway; AMP from IMP: step 1/2. In terms of biological role, plays an important role in the de novo pathway of purine nucleotide biosynthesis. Catalyzes the first committed step in the biosynthesis of AMP from IMP. This Caldanaerobacter subterraneus subsp. tengcongensis (strain DSM 15242 / JCM 11007 / NBRC 100824 / MB4) (Thermoanaerobacter tengcongensis) protein is Adenylosuccinate synthetase.